Consider the following 138-residue polypeptide: Phosphoribosyl-AMP cyclohydrolase (138 aa).

Aspartate 85 is a Mg(2+) binding site. Zn(2+) is bound at residue cysteine 86. Mg(2+) is bound by residues aspartate 87 and aspartate 89. 2 residues coordinate Zn(2+): cysteine 102 and cysteine 109.

This sequence belongs to the PRA-CH family. As to quaternary structure, homodimer. Mg(2+) serves as cofactor. Requires Zn(2+) as cofactor.

It is found in the cytoplasm. It carries out the reaction 1-(5-phospho-beta-D-ribosyl)-5'-AMP + H2O = 1-(5-phospho-beta-D-ribosyl)-5-[(5-phospho-beta-D-ribosylamino)methylideneamino]imidazole-4-carboxamide. It functions in the pathway amino-acid biosynthesis; L-histidine biosynthesis; L-histidine from 5-phospho-alpha-D-ribose 1-diphosphate: step 3/9. In terms of biological role, catalyzes the hydrolysis of the adenine ring of phosphoribosyl-AMP. This chain is Phosphoribosyl-AMP cyclohydrolase, found in Methanothermobacter thermautotrophicus (strain ATCC 29096 / DSM 1053 / JCM 10044 / NBRC 100330 / Delta H) (Methanobacterium thermoautotrophicum).